A 650-amino-acid polypeptide reads, in one-letter code: Methionine--tRNA ligase (650 aa).

The 'HIGH' region motif lies at 11 to 21 (YYVNDIPHIGH). Zn(2+) contacts are provided by Cys126, Cys129, Cys147, and Cys150. Positions 301–305 (KMSKS) match the 'KMSKS' region motif. Residue Lys304 coordinates ATP. Residues 513–535 (EKTEKAGEASPEKNEKEKKDAKE) are disordered. The tRNA-binding domain occupies 549-650 (DFKKVEIKVG…REKIAGSLIS (102 aa)).

The protein belongs to the class-I aminoacyl-tRNA synthetase family. MetG type 2A subfamily. Homodimer. Zn(2+) is required as a cofactor.

The protein resides in the cytoplasm. It carries out the reaction tRNA(Met) + L-methionine + ATP = L-methionyl-tRNA(Met) + AMP + diphosphate. Functionally, is required not only for elongation of protein synthesis but also for the initiation of all mRNA translation through initiator tRNA(fMet) aminoacylation. In Helicobacter pylori (strain ATCC 700392 / 26695) (Campylobacter pylori), this protein is Methionine--tRNA ligase (metG).